The following is a 213-amino-acid chain: MKAYQREFIEFALNKQVLKFGEFTLKSGRISPYFFNAGLFNTGLELAKLGRFYAAALMDCGVEFDLLFGPAYKGIPIATTTAVALAEHHNRDLPYCFNRKEAKDHGEGGSLVGSPLEGRVMLVDDVITAGTAIRESMEIINAQGATLAGVMISLDRQERGRGEISAIQEVERDYHCKVIAIVTLNDVISYLEEKPEMADHLAAVRHYREQYGV.

Lysine 26 contacts 5-phospho-alpha-D-ribose 1-diphosphate. An orotate-binding site is contributed by 34-35; the sequence is FF. Residues 72-73, arginine 99, lysine 100, lysine 103, histidine 105, and 124-132 each bind 5-phospho-alpha-D-ribose 1-diphosphate; these read YK and DDVITAGTA. Threonine 128 and arginine 156 together coordinate orotate.

The protein belongs to the purine/pyrimidine phosphoribosyltransferase family. PyrE subfamily. In terms of assembly, homodimer. Mg(2+) is required as a cofactor.

The catalysed reaction is orotidine 5'-phosphate + diphosphate = orotate + 5-phospho-alpha-D-ribose 1-diphosphate. Its pathway is pyrimidine metabolism; UMP biosynthesis via de novo pathway; UMP from orotate: step 1/2. Catalyzes the transfer of a ribosyl phosphate group from 5-phosphoribose 1-diphosphate to orotate, leading to the formation of orotidine monophosphate (OMP). This is Orotate phosphoribosyltransferase from Yersinia enterocolitica serotype O:8 / biotype 1B (strain NCTC 13174 / 8081).